Reading from the N-terminus, the 161-residue chain is ATP synthase subunit b 1 (161 aa).

The helical transmembrane segment at 3–23 (LDATFYALVGLILFFVLIAYL) threads the bilayer.

The protein belongs to the ATPase B chain family. In terms of assembly, F-type ATPases have 2 components, F(1) - the catalytic core - and F(0) - the membrane proton channel. F(1) has five subunits: alpha(3), beta(3), gamma(1), delta(1), epsilon(1). F(0) has three main subunits: a(1), b(2) and c(10-14). The alpha and beta chains form an alternating ring which encloses part of the gamma chain. F(1) is attached to F(0) by a central stalk formed by the gamma and epsilon chains, while a peripheral stalk is formed by the delta and b chains.

It localises to the cell inner membrane. Its function is as follows. F(1)F(0) ATP synthase produces ATP from ADP in the presence of a proton or sodium gradient. F-type ATPases consist of two structural domains, F(1) containing the extramembraneous catalytic core and F(0) containing the membrane proton channel, linked together by a central stalk and a peripheral stalk. During catalysis, ATP synthesis in the catalytic domain of F(1) is coupled via a rotary mechanism of the central stalk subunits to proton translocation. Component of the F(0) channel, it forms part of the peripheral stalk, linking F(1) to F(0). In Sinorhizobium medicae (strain WSM419) (Ensifer medicae), this protein is ATP synthase subunit b 1.